Reading from the N-terminus, the 477-residue chain is Cysteine--tRNA ligase (477 aa).

Cysteine 29 contacts Zn(2+). Positions 31-41 match the 'HIGH' region motif; sequence PTVYDYPHLGH. 3 residues coordinate Zn(2+): cysteine 209, histidine 234, and glutamate 238. Residues 266 to 270 carry the 'KMSKS' region motif; that stretch reads KMSKS. Lysine 269 lines the ATP pocket.

It belongs to the class-I aminoacyl-tRNA synthetase family. Requires Zn(2+) as cofactor.

It localises to the cytoplasm. It catalyses the reaction tRNA(Cys) + L-cysteine + ATP = L-cysteinyl-tRNA(Cys) + AMP + diphosphate. This is Cysteine--tRNA ligase (cysS) from Pyrococcus abyssi (strain GE5 / Orsay).